The primary structure comprises 492 residues: MGKLLELEGNLFEVMKEIRDELGSPNDLTIREVALAGSFTRCAVVFLCGLTDKDNVYKYVVRTLQYEEVQNEAAVVQTLLDRFISIAEVGKKTTFPDIINAILAGDTVILIDNIQTAIIINSRAWEKRSLEPPVTEDLIRGPRVGLNEDINVNKMLIRRSLRDPKLRFQSYIMGKRSQKEVTLVYIEDIINPHIVKELDRRLQSIVTDVVLETGTIEQLIQDNNLSPFPQFLNTERPDNIIASLAKGKAAILVDGSPFALIAPLVFVDIFQSVEDHYERWVIGTLLRFLRMGSGIIAVLLPAMYVALVSYHQGLIPSKLAYSIAGAREGVPFPAYIETLMMALTMELIREAGIRLPKPMGQTIGIVGGLVIGEAAVNAGIVNPFLVIIIAVTAIATFSLPVYSITITFRILLFVFVLAATAFGLYGIILALIALAIHITNLTSVGIPYTTPIAPAFYKDWKEEFIRMPKSMLKDRPEYLQTKDSTIRPKERK.

Helical transmembrane passes span 295–315 (IIAV…QGLI), 384–404 (FLVI…VYSI), and 410–430 (ILLF…IILA).

The protein belongs to the GerABKA family.

It is found in the membrane. Functionally, contributes to the L-alanine germination response. The polypeptide is Spore germination protein GerLA (gerLA) (Bacillus cereus).